The sequence spans 366 residues: UDP-N-acetylglucosamine--N-acetylmuramyl-(pentapeptide) pyrophosphoryl-undecaprenol N-acetylglucosamine transferase (366 aa).

UDP-N-acetyl-alpha-D-glucosamine contacts are provided by residues 10–12 (TGG), asparagine 124, arginine 165, serine 195, isoleucine 250, and glutamine 295.

Belongs to the glycosyltransferase 28 family. MurG subfamily.

The protein resides in the cell inner membrane. It carries out the reaction di-trans,octa-cis-undecaprenyl diphospho-N-acetyl-alpha-D-muramoyl-L-alanyl-D-glutamyl-meso-2,6-diaminopimeloyl-D-alanyl-D-alanine + UDP-N-acetyl-alpha-D-glucosamine = di-trans,octa-cis-undecaprenyl diphospho-[N-acetyl-alpha-D-glucosaminyl-(1-&gt;4)]-N-acetyl-alpha-D-muramoyl-L-alanyl-D-glutamyl-meso-2,6-diaminopimeloyl-D-alanyl-D-alanine + UDP + H(+). It functions in the pathway cell wall biogenesis; peptidoglycan biosynthesis. In terms of biological role, cell wall formation. Catalyzes the transfer of a GlcNAc subunit on undecaprenyl-pyrophosphoryl-MurNAc-pentapeptide (lipid intermediate I) to form undecaprenyl-pyrophosphoryl-MurNAc-(pentapeptide)GlcNAc (lipid intermediate II). This Thermodesulfovibrio yellowstonii (strain ATCC 51303 / DSM 11347 / YP87) protein is UDP-N-acetylglucosamine--N-acetylmuramyl-(pentapeptide) pyrophosphoryl-undecaprenol N-acetylglucosamine transferase.